A 436-amino-acid chain; its full sequence is Serine--tRNA ligase (436 aa).

241–243 (TSE) contributes to the L-serine binding site. Residue 272–274 (RAE) participates in ATP binding. E295 contributes to the L-serine binding site. 359-362 (EISS) provides a ligand contact to ATP. Residue S395 participates in L-serine binding.

Belongs to the class-II aminoacyl-tRNA synthetase family. Type-1 seryl-tRNA synthetase subfamily. In terms of assembly, homodimer. The tRNA molecule binds across the dimer.

It localises to the cytoplasm. It catalyses the reaction tRNA(Ser) + L-serine + ATP = L-seryl-tRNA(Ser) + AMP + diphosphate + H(+). The catalysed reaction is tRNA(Sec) + L-serine + ATP = L-seryl-tRNA(Sec) + AMP + diphosphate + H(+). It participates in aminoacyl-tRNA biosynthesis; selenocysteinyl-tRNA(Sec) biosynthesis; L-seryl-tRNA(Sec) from L-serine and tRNA(Sec): step 1/1. Functionally, catalyzes the attachment of serine to tRNA(Ser). Is also able to aminoacylate tRNA(Sec) with serine, to form the misacylated tRNA L-seryl-tRNA(Sec), which will be further converted into selenocysteinyl-tRNA(Sec). The protein is Serine--tRNA ligase of Beijerinckia indica subsp. indica (strain ATCC 9039 / DSM 1715 / NCIMB 8712).